Here is a 216-residue protein sequence, read N- to C-terminus: Large ribosomal subunit protein uL24m (216 aa).

Residues 1-9 (MRLSALLAL) constitute a mitochondrion transit peptide. At Ser24 the chain carries Phosphoserine. The KOW domain maps to 56 to 89 (LFCGDTVEILEGKDAGKQGKVVQVIRQRNWVVVG).

It belongs to the universal ribosomal protein uL24 family. Component of the mitochondrial large ribosomal subunit (mt-LSU). Mature mammalian 55S mitochondrial ribosomes consist of a small (28S) and a large (39S) subunit. The 28S small subunit contains a 12S ribosomal RNA (12S mt-rRNA) and 30 different proteins. The 39S large subunit contains a 16S rRNA (16S mt-rRNA), a copy of mitochondrial valine transfer RNA (mt-tRNA(Val)), which plays an integral structural role, and 52 different proteins.

It is found in the mitochondrion. The polypeptide is Large ribosomal subunit protein uL24m (MRPL24) (Homo sapiens (Human)).